Consider the following 383-residue polypeptide: Protein dyf-4 (383 aa).

An N-terminal signal peptide occupies residues 1–16 (MKTIWLLLATCIHVFA). N64 carries an N-linked (GlcNAc...) asparagine glycan.

In terms of assembly, interacts with daf-6. In terms of tissue distribution, expressed in sheath and socket glial cells in both the amphid and phasmid ciliated sensory neurons (at protein level).

Its subcellular location is the secreted. In terms of biological role, required for the localization of daf-6 to the socket glial channel and the sheath lumen. In association with daf-6, plays a role in dendrite extension and ciliogenesis to ensure the formation of glial channels in amphid and phasmid ciliated sensory neurons. This chain is Protein dyf-4, found in Caenorhabditis elegans.